The sequence spans 538 residues: Calcyphosin-2 (538 aa).

A compositionally biased stretch (polar residues) spans 134 to 146; that stretch reads RNAENTKSNVTHK. The segment at 134–154 is disordered; sequence RNAENTKSNVTHKQSPRNKID. 3 EF-hand domains span residues 426–461, 462–497, and 498–533; these read RILTGLGKYFQQLDKEGNGLLDKADFKQALKVFHLE, VSEKDFESAWLILNDNGNGKVDYGEFKRGIIGEMNE, and YRKSYVRKAFMKLDFNKSGSVPIINIRKCYCAKKHS. The Ca(2+) site is built by Asp439, Asn443, Asp450, Asn477, Asn479, Lys481, Glu486, Asp511, Asn513, Ser515, Ser517, and Asn522.

In terms of tissue distribution, abundantly expressed in many tissues. Expressed in brain, colon, heart, kidney, liver, lung, liver, pancreas, placenta, skeletal muscle, testis and thymus. Highest expression in colon, testis, lung, placenta and brain.

The protein is Calcyphosin-2 of Homo sapiens (Human).